The primary structure comprises 419 residues: L-rhamnose isomerase (419 aa).

Residues His262, Asp294, and Asp296 each coordinate Mn(2+).

Belongs to the rhamnose isomerase family. In terms of assembly, homotetramer. The cofactor is Mn(2+).

The protein resides in the cytoplasm. It carries out the reaction L-rhamnopyranose = L-rhamnulose. It functions in the pathway carbohydrate degradation; L-rhamnose degradation; glycerone phosphate from L-rhamnose: step 1/3. Its function is as follows. Catalyzes the interconversion of L-rhamnose and L-rhamnulose. This Shigella flexneri serotype 5b (strain 8401) protein is L-rhamnose isomerase.